The following is a 769-amino-acid chain: CO(2)-response secreted protease (769 aa).

Positions 1 to 27 (MKGITFFTPFLSFLYLLCILFMTETEA) are cleaved as a signal peptide. The 74-residue stretch at 35-108 (VYIVYMGSAS…VFPDPHFQLH (74 aa)) folds into the Inhibitor I9 domain. Residues 112-613 (SWDFLKYQTS…AGELSSTASM (502 aa)) form the Peptidase S8 domain. Active-site charge relay system residues include Asp145 and His210. The PA domain maps to 381-465 (ADASEGSARA…SKEAAEIFSY (85 aa)). Residue Ser546 is the Charge relay system of the active site.

This sequence belongs to the peptidase S8 family. In terms of tissue distribution, expressed in roots, guard cells and meristemoid and pavement cells.

The protein resides in the secreted. Its subcellular location is the cell wall. The enzyme catalyses Release of an N-terminal tripeptide from a polypeptide.. Its function is as follows. Mediates CO(2)-controlled stomatal development by cleaving peptide EPF2 (AC Q8LC53). Not active on peptides EPF1 (AC Q8S8I4) or stomagen (AC Q9SV72). This Arabidopsis thaliana (Mouse-ear cress) protein is CO(2)-response secreted protease.